We begin with the raw amino-acid sequence, 452 residues long: Transcription factor AP-2-delta (452 aa).

The residue at position 239 (serine 239) is a Phosphoserine; by PKA. Positions 280 to 410 (RRKAANVTLL…VLSEMLNYLE (131 aa)) are H-S-H (helix-span-helix), dimerization. Residues 416 to 452 (KNGGAADSGQGHANSEKAPLRKTSEAAVKEGKTEKTD) are disordered. Residues 429 to 452 (NSEKAPLRKTSEAAVKEGKTEKTD) are compositionally biased toward basic and acidic residues.

This sequence belongs to the AP-2 family. In terms of assembly, binds DNA as a dimer. Can form homodimers or heterodimers with other AP-2 family members. As to expression, highly expressed in brain, placenta, skeletal muscle, thymus, small intestine, and prostate, and expressed at lower levels in leukocyte, spleen, testis, ovary and colon. Barely detectable in heart, kidney, liver, lung or pancreas.

It is found in the nucleus. In terms of biological role, sequence-specific DNA-binding protein that interacts with inducible viral and cellular enhancer elements to regulate transcription of selected genes. AP-2 factors bind to the consensus sequence 5'-GCCNNNGGC-3' and activate genes involved in a large spectrum of important biological functions including proper eye, face, body wall, limb and neural tube development. They also suppress a number of genes including MCAM/MUC18, C/EBP alpha and MYC. The protein is Transcription factor AP-2-delta of Homo sapiens (Human).